Here is a 177-residue protein sequence, read N- to C-terminus: Endoribonuclease YbeY (177 aa).

The Zn(2+) site is built by histidine 118, histidine 122, and histidine 128.

This sequence belongs to the endoribonuclease YbeY family. Zn(2+) is required as a cofactor.

Its subcellular location is the cytoplasm. Single strand-specific metallo-endoribonuclease involved in late-stage 70S ribosome quality control and in maturation of the 3' terminus of the 16S rRNA. The sequence is that of Endoribonuclease YbeY from Mycobacterium sp. (strain JLS).